The chain runs to 204 residues: uncharacterized protein (204 aa).

Positions 77–111 (APHGSRIPGRCRRSPRCSRRPGGSRLRGGTWTPRL) are disordered. Positions 85 to 95 (GRCRRSPRCSR) are enriched in basic residues. The span at 96–105 (RPGGSRLRGG) shows a compositional bias: low complexity.

This is an uncharacterized protein from Homo sapiens (Human).